The primary structure comprises 312 residues: Bifunctional pinoresinol-lariciresinol reductase 2 (312 aa).

Residues 11-17, R36, and K45 contribute to the NADP(+) site; that span reads GGTGYIG. K138 serves as the catalytic Proton acceptor. An NADP(+)-binding site is contributed by R142. A substrate-binding site is contributed by H270.

This sequence belongs to the NmrA-type oxidoreductase family. Isoflavone reductase subfamily. Dimer.

The catalysed reaction is (+)-lariciresinol + NADP(+) = (+)-pinoresinol + NADPH + H(+). It carries out the reaction (-)-secoisolariciresinol + NADP(+) = (+)-lariciresinol + NADPH + H(+). It catalyses the reaction (-)-lariciresinol + NADP(+) = (-)-pinoresinol + NADPH + H(+). In terms of biological role, reductase involved in lignan biosynthesis. Catalyzes the enantioselective sequential conversion of (+)-pinoresinol into (+)-lariciresinol and of (+)-lariciresinol into (-)-secoisolariciresinol. Can also convert with a lower efficiency (-)-pinoresinol into (-)-lariciresinol, but not (-)-lariciresinol into (+)-secoisolariciresinol. Abstracts the 4R-hydride from the NADPH cofactor during catalysis. The chain is Bifunctional pinoresinol-lariciresinol reductase 2 (PLR_Tp2) from Thuja plicata (Western red-cedar).